The sequence spans 207 residues: N-(5'-phosphoribosyl)anthranilate isomerase (207 aa).

It belongs to the TrpF family.

The catalysed reaction is N-(5-phospho-beta-D-ribosyl)anthranilate = 1-(2-carboxyphenylamino)-1-deoxy-D-ribulose 5-phosphate. The protein operates within amino-acid biosynthesis; L-tryptophan biosynthesis; L-tryptophan from chorismate: step 3/5. The sequence is that of N-(5'-phosphoribosyl)anthranilate isomerase from Staphylococcus epidermidis (strain ATCC 35984 / DSM 28319 / BCRC 17069 / CCUG 31568 / BM 3577 / RP62A).